The primary structure comprises 331 residues: 5-formaminoimidazole-4-carboxamide-1-(beta)-D-ribofuranosyl 5'-monophosphate synthetase (331 aa).

5-amino-1-(5-phospho-beta-D-ribosyl)imidazole-4-carboxamide is bound by residues His-9 and Ser-69. Positions 76–322 constitute an ATP-grasp domain; that stretch reads VELVEKMKVP…IAMELKQGLE (247 aa). ATP contacts are provided by residues 120–179 and Glu-201; that span reads PDDI…VPVY. Asn-229 contributes to the 5-amino-1-(5-phospho-beta-D-ribosyl)imidazole-4-carboxamide binding site. Residues Glu-267 and Glu-280 each contribute to the Mg(2+) site.

Belongs to the phosphohexose mutase family. Requires Mg(2+) as cofactor. Mn(2+) serves as cofactor.

The enzyme catalyses 5-amino-1-(5-phospho-beta-D-ribosyl)imidazole-4-carboxamide + formate + ATP = 5-formamido-1-(5-phospho-D-ribosyl)imidazole-4-carboxamide + ADP + phosphate. It participates in purine metabolism; IMP biosynthesis via de novo pathway; 5-formamido-1-(5-phospho-D-ribosyl)imidazole-4-carboxamide from 5-amino-1-(5-phospho-D-ribosyl)imidazole-4-carboxamide (formate route): step 1/1. Functionally, catalyzes the ATP- and formate-dependent formylation of 5-aminoimidazole-4-carboxamide-1-beta-d-ribofuranosyl 5'-monophosphate (AICAR) to 5-formaminoimidazole-4-carboxamide-1-beta-d-ribofuranosyl 5'-monophosphate (FAICAR) in the absence of folates. The chain is 5-formaminoimidazole-4-carboxamide-1-(beta)-D-ribofuranosyl 5'-monophosphate synthetase from Thermococcus kodakarensis (strain ATCC BAA-918 / JCM 12380 / KOD1) (Pyrococcus kodakaraensis (strain KOD1)).